The chain runs to 938 residues: ATP-dependent RNA helicase DDX42 (938 aa).

A compositionally biased stretch (gly residues) spans Met-1 to Gly-18. Residues Met-1 to Asp-114 form a disordered region. Position 5 is an N6-acetyllysine (Lys-5). An Omega-N-methylarginine modification is found at Arg-12. Residues Ser-35–Ala-52 show a composition bias toward low complexity. Ser-58 carries the post-translational modification Phosphoserine. The segment covering Asp-70–Ser-84 has biased composition (acidic residues). A phosphoserine mark is found at Ser-96, Ser-104, Ser-109, and Ser-111. Positions Leu-116–Gln-157 form a coiled coil. The tract at residues Glu-182 to Ile-203 is disordered. Residue Ser-185 is modified to Phosphoserine. A Q motif motif is present at residues Ser-253 to Cys-281. One can recognise a Helicase ATP-binding domain in the interval Val-284–Val-459. Ala-297–Thr-304 lines the ATP pocket. Residues Asp-407–Asp-410 carry the DEAD box motif. The Helicase C-terminal domain occupies Trp-487–Ala-632. 2 stretches are compositionally biased toward polar residues: residues Leu-737–Thr-757 and Gly-786–Glu-798. A disordered region spans residues Leu-737–Ser-938. The tract at residues Asn-738–Arg-833 is necessary for interaction with TP53BP2. Ser-754 carries the post-translational modification Phosphoserine. The segment covering Ser-820–Ala-920 has biased composition (basic and acidic residues). Lys-899 is covalently cross-linked (Glycyl lysine isopeptide (Lys-Gly) (interchain with G-Cter in SUMO2)).

The protein belongs to the DEAD box helicase family. DDX42 subfamily. In terms of assembly, transient component of the SF3B subcomplex of the 17S U2 SnRNP complex. Interacts (via the C-terminus) with TP53BP2; the interaction is not inhibitied by TP53BP2 ubiquitination and is independent of p53/TP53. Expressed in several cell lines (at protein level). Expressed in liver, lung, tonsil, thymus, muscle and pancreatic islets.

The protein localises to the cytoplasm. The protein resides in the nucleus. It is found in the cajal body. It localises to the nucleus speckle. It catalyses the reaction ATP + H2O = ADP + phosphate + H(+). ATP-dependent RNA helicase that binds to partially double-stranded RNAs (dsRNAs) in order to unwind RNA secondary structures. Unwinding is promoted in the presence of single-strand binding proteins. Also mediates RNA duplex formation thereby displacing the single-strand RNA binding protein. ATP and ADP modulate its activity: ATP binding and hydrolysis by DDX42 triggers RNA strand separation, whereas the ADP-bound form of the protein triggers annealing of complementary RNA strands. Required for assembly of the 17S U2 SnRNP complex of the spliceosome, a large ribonucleoprotein complex that removes introns from transcribed pre-mRNAs: DDX42 associates transiently with the SF3B subcomplex of the 17S U2 SnRNP complex and is released after fulfilling its role in the assembly of 17S U2 SnRNP. Involved in the survival of cells by interacting with TP53BP2 and thereby counteracting the apoptosis-stimulating activity of TP53BP2. Relocalizes TP53BP2 to the cytoplasm. This Homo sapiens (Human) protein is ATP-dependent RNA helicase DDX42.